A 469-amino-acid polypeptide reads, in one-letter code: Argininosuccinate lyase (469 aa).

The protein belongs to the lyase 1 family. Argininosuccinate lyase subfamily.

It is found in the cytoplasm. The catalysed reaction is 2-(N(omega)-L-arginino)succinate = fumarate + L-arginine. It participates in amino-acid biosynthesis; L-arginine biosynthesis; L-arginine from L-ornithine and carbamoyl phosphate: step 3/3. This Mycolicibacterium smegmatis (strain ATCC 700084 / mc(2)155) (Mycobacterium smegmatis) protein is Argininosuccinate lyase.